The primary structure comprises 228 residues: 5'-methylthioadenosine/S-adenosylhomocysteine nucleosidase (228 aa).

Glu11 (proton acceptor) is an active-site residue. Residues Gly77, Ile151, and 172–173 (ME) contribute to the substrate site. Catalysis depends on Asp196, which acts as the Proton donor.

It belongs to the PNP/UDP phosphorylase family. MtnN subfamily.

It catalyses the reaction S-adenosyl-L-homocysteine + H2O = S-(5-deoxy-D-ribos-5-yl)-L-homocysteine + adenine. The enzyme catalyses S-methyl-5'-thioadenosine + H2O = 5-(methylsulfanyl)-D-ribose + adenine. The catalysed reaction is 5'-deoxyadenosine + H2O = 5-deoxy-D-ribose + adenine. Its pathway is amino-acid biosynthesis; L-methionine biosynthesis via salvage pathway; S-methyl-5-thio-alpha-D-ribose 1-phosphate from S-methyl-5'-thioadenosine (hydrolase route): step 1/2. Functionally, catalyzes the irreversible cleavage of the glycosidic bond in both 5'-methylthioadenosine (MTA) and S-adenosylhomocysteine (SAH/AdoHcy) to adenine and the corresponding thioribose, 5'-methylthioribose and S-ribosylhomocysteine, respectively. Also cleaves 5'-deoxyadenosine, a toxic by-product of radical S-adenosylmethionine (SAM) enzymes, into 5-deoxyribose and adenine. The chain is 5'-methylthioadenosine/S-adenosylhomocysteine nucleosidase from Staphylococcus saprophyticus subsp. saprophyticus (strain ATCC 15305 / DSM 20229 / NCIMB 8711 / NCTC 7292 / S-41).